We begin with the raw amino-acid sequence, 190 residues long: Elongation factor P-like protein (190 aa).

The protein belongs to the elongation factor P family.

The chain is Elongation factor P-like protein from Cronobacter sakazakii (strain ATCC BAA-894) (Enterobacter sakazakii).